The chain runs to 113 residues: Protein PucD (113 aa).

In terms of biological role, seems to be required for the LH-II stabilization. The polypeptide is Protein PucD (pucD) (Rhodobacter capsulatus (Rhodopseudomonas capsulata)).